We begin with the raw amino-acid sequence, 426 residues long: Enolase (426 aa).

Gln162 lines the (2R)-2-phosphoglycerate pocket. Glu204 (proton donor) is an active-site residue. Mg(2+)-binding residues include Asp241, Glu284, and Asp311. Lys336, Arg365, Ser366, and Lys387 together coordinate (2R)-2-phosphoglycerate. Catalysis depends on Lys336, which acts as the Proton acceptor.

The protein belongs to the enolase family. As to quaternary structure, component of the RNA degradosome, a multiprotein complex involved in RNA processing and mRNA degradation. The cofactor is Mg(2+).

The protein localises to the cytoplasm. It is found in the secreted. Its subcellular location is the cell surface. It catalyses the reaction (2R)-2-phosphoglycerate = phosphoenolpyruvate + H2O. It participates in carbohydrate degradation; glycolysis; pyruvate from D-glyceraldehyde 3-phosphate: step 4/5. Catalyzes the reversible conversion of 2-phosphoglycerate (2-PG) into phosphoenolpyruvate (PEP). It is essential for the degradation of carbohydrates via glycolysis. This chain is Enolase, found in Thioalkalivibrio sulfidiphilus (strain HL-EbGR7).